A 599-amino-acid chain; its full sequence is MKYKKKNILFITTIIVIYLAFLFNWLEIGIFKPKGESISESEMLSKISRKDISESVRYSVYKTMFLKDKPFDIRNVYQIELTTHNNEKFHAEIIKNTKEELSFELLPRNKISYQYEFRPFSWLLSIFSILLNFINVLSSLVFTIYIFLAIHRESGKLNSKSLITSKQKSLFTFKDVAGNTEEKEEMTELIDFLKQPQKYETIGAAIPRGVLLEGPPGTGKTLLAKALAGEASVPFYAVSGSEFVEMYVGVGASRVRKLFKEAKLNAPCVLFIDEIDVLGGRRGGNSSGGNQEKDQTLNQLLTEMDGFTPSQGIIVIGATNRADMLDAALLRPGRFDRKILVNLPDIKSRAEILKLHAQNKKLSSDIDFHQLAQQTPGMSGAQLAAVLNEASILTVRNHKDFITMTELSEALDRVLMGPAKKSIKYDPEERRMVAYHEAGHAVIGIKLKHAQKVQKITIIPRGNAGGYNLMMPEKETFFSSRKRMLAQIQSFLGGRVAEELVFDDISSGAFDDFRQATKIARLMVTKYGMSDLGVSQDSEFSDKKLIDTAIKKIIDNCYARTKHLMLENKTLLDQIAHLLLEQETITQAEIEQLVVNTKK.

The Cytoplasmic portion of the chain corresponds to 1 to 7 (MKYKKKN). Residues 8-28 (ILFITTIIVIYLAFLFNWLEI) form a helical membrane-spanning segment. At 29–128 (GIFKPKGESI…PFSWLLSIFS (100 aa)) the chain is on the extracellular side. A helical transmembrane segment spans residues 129-149 (ILLNFINVLSSLVFTIYIFLA). The Cytoplasmic portion of the chain corresponds to 150–599 (IHRESGKLNS…IEQLVVNTKK (450 aa)). ATP is bound at residue 214-221 (GPPGTGKT). Histidine 436 contacts Zn(2+). The active site involves glutamate 437. Zn(2+) contacts are provided by histidine 440 and aspartate 512.

It in the central section; belongs to the AAA ATPase family. This sequence in the C-terminal section; belongs to the peptidase M41 family. In terms of assembly, homohexamer. The cofactor is Zn(2+).

It is found in the cell membrane. Its function is as follows. Acts as a processive, ATP-dependent zinc metallopeptidase for both cytoplasmic and membrane proteins. Plays a role in the quality control of integral membrane proteins. This Phytoplasma mali (strain AT) protein is ATP-dependent zinc metalloprotease FtsH 3.